The following is a 360-amino-acid chain: Photosystem II protein D1 (360 aa).

A run of 3 helical transmembrane segments spans residues 29–46, 118–133, and 142–156; these read YIGW…TATT, HFLL…EWEL, and WIAV…AATA. His-118 is a binding site for chlorophyll a. Position 126 (Tyr-126) interacts with pheophytin a. 2 residues coordinate [CaMn4O5] cluster: Asp-170 and Glu-189. Residues 197-218 traverse the membrane as a helical segment; it reads FHMMGVAGVFGGSLFSAMHGSL. His-198 provides a ligand contact to chlorophyll a. A quinone is bound by residues His-215 and 264–265; that span reads SF. His-215 provides a ligand contact to Fe cation. Residue His-272 coordinates Fe cation. The helical transmembrane segment at 274 to 288 threads the bilayer; it reads FLALWPVVGIWFTAL. 4 residues coordinate [CaMn4O5] cluster: His-332, Glu-333, Asp-342, and Ala-344. The propeptide occupies 345–360; it reads SGEVMPVALTAPSINA.

This sequence belongs to the reaction center PufL/M/PsbA/D family. PSII is composed of 1 copy each of membrane proteins PsbA, PsbB, PsbC, PsbD, PsbE, PsbF, PsbH, PsbI, PsbJ, PsbK, PsbL, PsbM, PsbT, PsbX, PsbY, PsbZ, Psb30/Ycf12, at least 3 peripheral proteins of the oxygen-evolving complex and a large number of cofactors. It forms dimeric complexes. The D1/D2 heterodimer binds P680, chlorophylls that are the primary electron donor of PSII, and subsequent electron acceptors. It shares a non-heme iron and each subunit binds pheophytin, quinone, additional chlorophylls, carotenoids and lipids. D1 provides most of the ligands for the Mn4-Ca-O5 cluster of the oxygen-evolving complex (OEC). There is also a Cl(-1) ion associated with D1 and D2, which is required for oxygen evolution. The PSII complex binds additional chlorophylls, carotenoids and specific lipids. is required as a cofactor. Tyr-161 forms a radical intermediate that is referred to as redox-active TyrZ, YZ or Y-Z. Post-translationally, C-terminally processed by CTPA; processing is essential to allow assembly of the oxygen-evolving complex and thus photosynthetic growth.

It localises to the plastid. Its subcellular location is the cyanelle thylakoid membrane. The catalysed reaction is 2 a plastoquinone + 4 hnu + 2 H2O = 2 a plastoquinol + O2. Functionally, photosystem II (PSII) is a light-driven water:plastoquinone oxidoreductase that uses light energy to abstract electrons from H(2)O, generating O(2) and a proton gradient subsequently used for ATP formation. It consists of a core antenna complex that captures photons, and an electron transfer chain that converts photonic excitation into a charge separation. The D1/D2 (PsbA/PsbD) reaction center heterodimer binds P680, the primary electron donor of PSII as well as several subsequent electron acceptors. The protein is Photosystem II protein D1 of Cyanophora paradoxa.